A 471-amino-acid polypeptide reads, in one-letter code: Glutamyl-tRNA(Gln) amidotransferase subunit A, mitochondrial (471 aa).

Residues Lys64 and Ser141 each act as charge relay system in the active site. The active-site Acyl-ester intermediate is Ser165.

It belongs to the amidase family. GatA subfamily. In terms of assembly, subunit of the heterotrimeric GatCAB amidotransferase (AdT) complex, composed of A, B and C subunits.

The protein resides in the mitochondrion. It catalyses the reaction L-glutamyl-tRNA(Gln) + L-glutamine + ATP + H2O = L-glutaminyl-tRNA(Gln) + L-glutamate + ADP + phosphate + H(+). Its function is as follows. Allows the formation of correctly charged Gln-tRNA(Gln) through the transamidation of misacylated Glu-tRNA(Gln) in the mitochondria. The reaction takes place in the presence of glutamine and ATP through an activated gamma-phospho-Glu-tRNA(Gln). This Schizosaccharomyces pombe (strain 972 / ATCC 24843) (Fission yeast) protein is Glutamyl-tRNA(Gln) amidotransferase subunit A, mitochondrial.